A 438-amino-acid polypeptide reads, in one-letter code: 23S rRNA (uracil(1939)-C(5))-methyltransferase RlmD (438 aa).

A TRAM domain is found at 10 to 69 (KASVNTKHLSVDVVRLDHNGAGIAFVDKKPVFIEGALPGEKAIIQFIEQKKQFSRAKLIK). Cys-82, Cys-88, Cys-91, and Cys-169 together coordinate [4Fe-4S] cluster. S-adenosyl-L-methionine contacts are provided by Gln-272, Phe-301, Asn-306, Glu-322, Asn-349, and Asp-370. Residue Cys-396 is the Nucleophile of the active site.

This sequence belongs to the class I-like SAM-binding methyltransferase superfamily. RNA M5U methyltransferase family. RlmD subfamily.

The catalysed reaction is uridine(1939) in 23S rRNA + S-adenosyl-L-methionine = 5-methyluridine(1939) in 23S rRNA + S-adenosyl-L-homocysteine + H(+). Catalyzes the formation of 5-methyl-uridine at position 1939 (m5U1939) in 23S rRNA. The polypeptide is 23S rRNA (uracil(1939)-C(5))-methyltransferase RlmD (Aliivibrio fischeri (strain MJ11) (Vibrio fischeri)).